The following is a 148-amino-acid chain: uncharacterized protein (148 aa).

Polar residues predominate over residues 1 to 11 (MKPRNINNSLP). Residues 1–31 (MKPRNINNSLPLQPLVPDQENKNKKNEEKSV) are disordered. Basic and acidic residues predominate over residues 19–30 (QENKNKKNEEKS).

This is an uncharacterized protein from Escherichia coli (strain K12).